A 208-amino-acid chain; its full sequence is CASP-like protein 4A4 (208 aa).

Topologically, residues 1–53 (MKELKDHVVVITYGPSSEASVTASPVSQQTPSLFAYSVTPSASRFSSRRASVH) are cytoplasmic. A helical transmembrane segment spans residues 54-74 (VIGLVLRFITMVLCFVSALSL). Residues 75-92 (AVNVQRPSKRHLTQNSSS) lie on the Extracellular side of the membrane. An N-linked (GlcNAc...) asparagine glycan is attached at Asn89. The helical transmembrane segment at 93–113 (FASYPELLYCFGVAVIGFVYT) threads the bilayer. At 114-141 (SLQTFKGVCDITHRGVLISEPLSDYISF) the chain is on the cytoplasmic side. Residues 142–162 (IFDQVICYLLVSSSSVAIAWI) traverse the membrane as a helical segment. Residues 163 to 176 (QHINEDAIKTLRNN) lie on the Extracellular side of the membrane. Residue Asn175 is glycosylated (N-linked (GlcNAc...) asparagine). Residues 177-197 (SIVSVSMSFSAFLVLTLSGLL) traverse the membrane as a helical segment. The Cytoplasmic segment spans residues 198-208 (SGYKLCKRFMW).

The protein belongs to the Casparian strip membrane proteins (CASP) family. Homodimer and heterodimers.

It localises to the cell membrane. In Arabidopsis thaliana (Mouse-ear cress), this protein is CASP-like protein 4A4.